The following is a 536-amino-acid chain: Casein kinase I homolog RAG8 (536 aa).

Positions 26 to 42 (HSTQVLHGSGQHGMQPS) are enriched in polar residues. Residues 26–68 (HSTQVLHGSGQHGMQPSGNNVLNGLANGATGLQSSASSTSTRD) are disordered. The span at 43-65 (GNNVLNGLANGATGLQSSASSTS) shows a compositional bias: low complexity. Residues 77-361 (YKIGKKIGEG…QKLDGEYDWM (285 aa)) form the Protein kinase domain. Residues 83–91 (IGEGSFGVL) and Lys-106 each bind ATP. Asp-196 (proton acceptor) is an active-site residue. Polar residues-rich tracts occupy residues 407-420 (NNLNGSNVPLQSHS) and 427-436 (DLTQGVSNAP). The disordered stretch occupies residues 407-524 (NNLNGSNVPL…NGKVQVADSN (118 aa)). Low complexity-rich tracts occupy residues 437–453 (QQPQQIMSQQQYQQHTQ) and 463–514 (AYKQ…NQPQ). S-palmitoyl cysteine attachment occurs at residues Cys-535 and Cys-536.

It belongs to the protein kinase superfamily. CK1 Ser/Thr protein kinase family. Casein kinase I subfamily.

It carries out the reaction L-seryl-[protein] + ATP = O-phospho-L-seryl-[protein] + ADP + H(+). The catalysed reaction is L-threonyl-[protein] + ATP = O-phospho-L-threonyl-[protein] + ADP + H(+). Casein kinases are operationally defined by their preferential utilization of acidic proteins such as caseins as substrates. In Kluyveromyces lactis (strain ATCC 8585 / CBS 2359 / DSM 70799 / NBRC 1267 / NRRL Y-1140 / WM37) (Yeast), this protein is Casein kinase I homolog RAG8 (RAG8).